The chain runs to 520 residues: Ribonuclease Y (520 aa).

The helical transmembrane segment at 5 to 25 (ITIISSLLFLIVGLVVGSLIF) threads the bilayer. The segment at 70 to 127 (RTEIENELRGRRTETQKAENRLLQREENLDRKDTSLSKREATLERKEESISKRQQQIE) is disordered. The region spanning 210 to 273 (TVSVVTLPND…EIARIALEKL (64 aa)) is the KH domain. Residues 336–429 (VLNHSLEVSK…VAAADALSAA (94 aa)) form the HD domain.

It belongs to the RNase Y family.

It is found in the cell membrane. Functionally, endoribonuclease that initiates mRNA decay. The protein is Ribonuclease Y of Listeria welshimeri serovar 6b (strain ATCC 35897 / DSM 20650 / CCUG 15529 / CIP 8149 / NCTC 11857 / SLCC 5334 / V8).